A 161-amino-acid chain; its full sequence is uncharacterized protein (161 aa).

Residues 30-50 (GVILFRLLGVILFRLLGVILF) traverse the membrane as a helical segment.

It is found in the membrane. This is an uncharacterized protein from Homo sapiens (Human).